The following is a 170-amino-acid chain: Ribosome maturation factor RimM (170 aa).

Residues 98 to 170 (PDEYYWVDLE…LIVVDWDPDF (73 aa)) form the PRC barrel domain.

It belongs to the RimM family. As to quaternary structure, binds ribosomal protein uS19.

The protein resides in the cytoplasm. Its function is as follows. An accessory protein needed during the final step in the assembly of 30S ribosomal subunit, possibly for assembly of the head region. Essential for efficient processing of 16S rRNA. May be needed both before and after RbfA during the maturation of 16S rRNA. It has affinity for free ribosomal 30S subunits but not for 70S ribosomes. The protein is Ribosome maturation factor RimM of Xanthomonas axonopodis pv. citri (strain 306).